The primary structure comprises 37 residues: Large ribosomal subunit protein bL36 (37 aa).

This sequence belongs to the bacterial ribosomal protein bL36 family.

This chain is Large ribosomal subunit protein bL36, found in Streptomyces avermitilis (strain ATCC 31267 / DSM 46492 / JCM 5070 / NBRC 14893 / NCIMB 12804 / NRRL 8165 / MA-4680).